Reading from the N-terminus, the 267-residue chain is Small ribosomal subunit protein uS2 (267 aa).

Positions 225–267 (LREQELEGEEQEEAAPATEEEKKELIEEAVAEGEAEETEEEEK) are disordered. Residues 251–267 (EEAVAEGEAEETEEEEK) are compositionally biased toward acidic residues.

This sequence belongs to the universal ribosomal protein uS2 family.

The chain is Small ribosomal subunit protein uS2 from Nitratiruptor sp. (strain SB155-2).